The sequence spans 326 residues: Undecaprenyl-phosphate 4-deoxy-4-formamido-L-arabinose transferase (326 aa).

The next 2 membrane-spanning stretches (helical) occupy residues leucine 236–valine 256 and valine 270–leucine 290.

The protein belongs to the glycosyltransferase 2 family.

It localises to the cell inner membrane. The catalysed reaction is UDP-4-deoxy-4-formamido-beta-L-arabinose + di-trans,octa-cis-undecaprenyl phosphate = 4-deoxy-4-formamido-alpha-L-arabinopyranosyl di-trans,octa-cis-undecaprenyl phosphate + UDP. Its pathway is glycolipid biosynthesis; 4-amino-4-deoxy-alpha-L-arabinose undecaprenyl phosphate biosynthesis; 4-amino-4-deoxy-alpha-L-arabinose undecaprenyl phosphate from UDP-4-deoxy-4-formamido-beta-L-arabinose and undecaprenyl phosphate: step 1/2. The protein operates within bacterial outer membrane biogenesis; lipopolysaccharide biosynthesis. Catalyzes the transfer of 4-deoxy-4-formamido-L-arabinose from UDP to undecaprenyl phosphate. The modified arabinose is attached to lipid A and is required for resistance to polymyxin and cationic antimicrobial peptides. In Proteus mirabilis (strain HI4320), this protein is Undecaprenyl-phosphate 4-deoxy-4-formamido-L-arabinose transferase.